The chain runs to 249 residues: Probable transcriptional regulatory protein Strop_1792 (249 aa).

It belongs to the TACO1 family.

It is found in the cytoplasm. This Salinispora tropica (strain ATCC BAA-916 / DSM 44818 / JCM 13857 / NBRC 105044 / CNB-440) protein is Probable transcriptional regulatory protein Strop_1792.